Reading from the N-terminus, the 375-residue chain is Esterase AN6793 (375 aa).

The tract at residues 138–158 (RHPQPGLDPGHGHRHKRMPPL) is disordered.

The protein belongs to the sidJ hydrolase family. In terms of assembly, homodimer.

Its pathway is secondary metabolite biosynthesis. Esterase; part of a cluster that mediates the biosynthesis of a yet undetermined secondary metabolite. With the HR-PKS AN6791, produces a pathway intermediate compound with molecular weight 258. In Emericella nidulans (strain FGSC A4 / ATCC 38163 / CBS 112.46 / NRRL 194 / M139) (Aspergillus nidulans), this protein is Esterase AN6793.